The following is a 130-amino-acid chain: uncharacterized protein (130 aa).

Residues V21 to I43 traverse the membrane as a helical segment.

The protein resides in the membrane. This is an uncharacterized protein from Saccharomyces cerevisiae (strain ATCC 204508 / S288c) (Baker's yeast).